The chain runs to 65 residues: Large ribosomal subunit protein bL28 (65 aa).

Residues 1–21 are disordered; sequence MAKKDQLTLRGPLYGNNRSHS.

Belongs to the bacterial ribosomal protein bL28 family.

The protein is Large ribosomal subunit protein bL28 of Mycoplasma pneumoniae (strain ATCC 29342 / M129 / Subtype 1) (Mycoplasmoides pneumoniae).